The primary structure comprises 1523 residues: Disco-interacting protein 2 homolog A (1523 aa).

A DMAP1-binding domain is found at 9–105 (EAAPLPAEVL…TSSASEDEGS (97 aa)). Residues 72 to 110 (KMPMPSKRRSALVHSSVETYTPPDTSSASEDEGSLRRPG) form a disordered region. Residues 87–99 (SVETYTPPDTSSA) are compositionally biased toward polar residues. Phosphothreonine occurs at positions 92 and 115. The interval 132–158 (QGSSTSSSASSTSSHPGGRPAAAPSAS) is disordered. Low complexity predominate over residues 134 to 158 (SSTSSSASSTSSHPGGRPAAAPSAS). Short sequence motifs (PXXP motif; required for interaction with CTTN) lie at residues 235 to 238 (PKRP) and 259 to 262 (PNQP).

Belongs to the DIP2 family. In terms of assembly, interacts with FSTL1; DIP2A may act as a cell surface receptor for FSTL1. Interacts (via N-terminus) with CTTN (via SH3 domain); the interaction promotes acetylation of CTTN and is required for proper synaptic transmission. Interacts with SHANK3. As to expression, detected in heart, liver, spleen, lung, kidney and brain with highest levels in brain (at protein level). In adult cortex, preferentially expressed in excitatory neurons. Broadly expressed in neuronal, reproductive and vascular tissues as well as in heart, kidney, liver and lung with expression detected in neurons, mesenchyme, endothelium, smooth muscle cells and cardiomyocytes. Expressed in ectoderm-derived tissues in the developing embryo. Expressed in the developing nervous system.

The protein resides in the cell membrane. It localises to the mitochondrion. The protein localises to the cell projection. Its subcellular location is the dendritic spine. It carries out the reaction acetate + ATP + CoA = acetyl-CoA + AMP + diphosphate. Its function is as follows. Catalyzes the de novo synthesis of acetyl-CoA in vitro. Promotes acetylation of CTTN, possibly by providing the acetyl donor, ensuring correct dendritic spine morphology and synaptic transmission. Binds to follistatin-related protein FSTL1 and may act as a cell surface receptor for FSTL1, contributing to AKT activation and subsequent FSTL1-induced survival and function of endothelial cells and cardiac myocytes. The sequence is that of Disco-interacting protein 2 homolog A (Dip2a) from Mus musculus (Mouse).